The chain runs to 1045 residues: Collagen alpha-1(VI) chain (1045 aa).

The signal sequence occupies residues 1–24; it reads MKMLQGRLPLTVLHLFLLLGGGMT. In terms of domain architecture, VWFA 1 spans 65–255; sequence DIFFVLDTSE…LTDDEIDNTI (191 aa). Residues 277–613 are disordered; the sequence is PSRGLSGPSG…GPPGPGGPPG (337 aa). The triple-helical region stretch occupies residues 280-540; the sequence is GLSGPSGPPG…RGDDGRPGNG (261 aa). Positions 297-309 are enriched in low complexity; the sequence is PGLPGDRGLPGDP. Residues 327–360 show a composition bias toward basic and acidic residues; the sequence is QGIRGEKGGRGAKGSKGDKGKRGIDGVDGQKGED. Positions 375-392 are enriched in low complexity; that stretch reads DGAPGSSGPKGDPGPYGT. A compositionally biased stretch (gly residues) spans 400-409; sequence GTPGTGGRPG. 2 short sequence motifs (cell attachment site) span residues 501-503 and 554-556; these read RGD. Pro residues predominate over residues 600-613; it reads EGPPGPPGPGGPPG. 2 consecutive VWFA domains span residues 638-825 and 849-1035; these read DLLF…LHNV and DITM…YQSI.

This sequence belongs to the type VI collagen family.

It is found in the secreted. The protein localises to the extracellular space. Its subcellular location is the extracellular matrix. Collagen VI acts as a cell-binding protein. This is Collagen alpha-1(VI) chain (col6a1) from Xenopus laevis (African clawed frog).